A 572-amino-acid polypeptide reads, in one-letter code: Proline--tRNA ligase (572 aa).

It belongs to the class-II aminoacyl-tRNA synthetase family. ProS type 1 subfamily. As to quaternary structure, homodimer.

It is found in the cytoplasm. It carries out the reaction tRNA(Pro) + L-proline + ATP = L-prolyl-tRNA(Pro) + AMP + diphosphate. Catalyzes the attachment of proline to tRNA(Pro) in a two-step reaction: proline is first activated by ATP to form Pro-AMP and then transferred to the acceptor end of tRNA(Pro). As ProRS can inadvertently accommodate and process non-cognate amino acids such as alanine and cysteine, to avoid such errors it has two additional distinct editing activities against alanine. One activity is designated as 'pretransfer' editing and involves the tRNA(Pro)-independent hydrolysis of activated Ala-AMP. The other activity is designated 'posttransfer' editing and involves deacylation of mischarged Ala-tRNA(Pro). The misacylated Cys-tRNA(Pro) is not edited by ProRS. The polypeptide is Proline--tRNA ligase (Yersinia pseudotuberculosis serotype O:1b (strain IP 31758)).